The chain runs to 644 residues: uncharacterized protein (644 aa).

Disordered stretches follow at residues 1-35 (MSSH…EYCS) and 48-106 (GNSH…SHHN). S28 bears the Phosphoserine mark. Residues 58 to 70 (NGASSSNNNVAKS) show a composition bias toward low complexity. Residues 83–106 (YDSTSNSNEPISFNEPDSSNSHHN) are compositionally biased toward polar residues. 12 consecutive transmembrane segments (helical) span residues 131 to 151 (ILPL…PLLF), 190 to 210 (AAFG…YGTM), 218 to 238 (LVLF…LYQS), 245 to 265 (YFVL…TVVA), 286 to 306 (LNFA…GFIV), 314 to 334 (YVFY…WLIL), 398 to 418 (VLLA…MGLL), 435 to 455 (LILS…FPLL), 522 to 542 (VWNA…LAVA), 546 to 566 (VALF…PCVQ), 583 to 603 (AAFA…YAFV), and 614 to 634 (NMIF…IFFM).

It localises to the membrane. This is an uncharacterized protein from Schizosaccharomyces pombe (strain 972 / ATCC 24843) (Fission yeast).